We begin with the raw amino-acid sequence, 495 residues long: Glutamyl-tRNA(Gln) amidotransferase subunit A (495 aa).

Catalysis depends on charge relay system residues lysine 78 and serine 159. Serine 183 serves as the catalytic Acyl-ester intermediate.

The protein belongs to the amidase family. GatA subfamily. In terms of assembly, heterotrimer of A, B and C subunits.

It catalyses the reaction L-glutamyl-tRNA(Gln) + L-glutamine + ATP + H2O = L-glutaminyl-tRNA(Gln) + L-glutamate + ADP + phosphate + H(+). Its function is as follows. Allows the formation of correctly charged Gln-tRNA(Gln) through the transamidation of misacylated Glu-tRNA(Gln) in organisms which lack glutaminyl-tRNA synthetase. The reaction takes place in the presence of glutamine and ATP through an activated gamma-phospho-Glu-tRNA(Gln). This Rhizorhabdus wittichii (strain DSM 6014 / CCUG 31198 / JCM 15750 / NBRC 105917 / EY 4224 / RW1) (Sphingomonas wittichii) protein is Glutamyl-tRNA(Gln) amidotransferase subunit A.